The sequence spans 313 residues: Adhesin MafA 2 (313 aa).

A signal peptide spans 1–14 (MKTLLLLIPLVLTA). The N-palmitoyl cysteine moiety is linked to residue Cys-15. Cys-15 carries the S-diacylglycerol cysteine lipid modification. Residues 282–297 (GDTTAQNRPDFKQNNG) show a composition bias toward polar residues. The disordered stretch occupies residues 282–313 (GDTTAQNRPDFKQNNGKKPDVGNEVIRRRKGG).

It belongs to the MafA family.

The protein resides in the cell outer membrane. The protein is Adhesin MafA 2 (mafA2) of Neisseria meningitidis serogroup C / serotype 2a (strain ATCC 700532 / DSM 15464 / FAM18).